The primary structure comprises 376 residues: Galactoside alpha-(1,2)-fucosyltransferase 1 (376 aa).

Residues 1 to 12 are Cytoplasmic-facing; that stretch reads MWTPSRKQLCLA. Residues 13 to 29 form a helical; Signal-anchor for type II membrane protein membrane-spanning segment; sequence FLSVCVLSAGSFFFHLN. The Lumenal segment spans residues 30 to 376; sequence GGNFFQNALT…WETDSLFRLA (347 aa). N-linked (GlcNAc...) asparagine glycosylation is found at asparagine 64, asparagine 302, and asparagine 328.

It belongs to the glycosyltransferase 11 family.

Its subcellular location is the golgi apparatus. It localises to the golgi stack membrane. It carries out the reaction a beta-D-galactosyl-(1-&gt;4)-N-acetyl-beta-D-glucosaminyl derivative + GDP-beta-L-fucose = an alpha-L-Fuc-(1-&gt;2)-beta-D-Gal-(1-&gt;4)-beta-D-GlcNAc derivative + GDP + H(+). It catalyses the reaction a ganglioside GA1 + GDP-beta-L-fucose = a ganglioside Fuc-GA1 + GDP + H(+). The catalysed reaction is a beta-D-Gal-(1-&gt;3)-beta-D-GlcNAc-(1-&gt;3)-beta-D-Gal-(1-&gt;4)-beta-D-Glc-(1&lt;-&gt;1')-Cer(d18:1(4E)) + GDP-beta-L-fucose = alpha-L-fucosyl-(1-&gt;2)- beta-D-galactosyl-(1-&gt;3)-N-acetyl-beta-D-glucosaminyl-(1-&gt;3)-beta-D-galactosyl-(1-&gt;4)-beta-D-glucosyl-(1&lt;-&gt;1')-N-acylsphing-4-enine + GDP + H(+). The enzyme catalyses a neolactoside nLc4Cer(d18:1(4E)) + GDP-beta-L-fucose = a neolactoside IV(2)-alpha-Fuc-nLc4Cer(d18:1(4E)) + GDP + H(+). It carries out the reaction a ganglioside GM1 + GDP-beta-L-fucose = a ganglioside Fuc-GM1 + GDP + H(+). It catalyses the reaction beta-D-galactosyl-(1-&gt;3)-N-acetyl-D-galactosamine + GDP-beta-L-fucose = alpha-L-fucosyl-(1-&gt;2)-beta-D-galactosyl-(1-&gt;3)-N-acetyl-D-galactosamine + GDP + H(+). It functions in the pathway protein modification; protein glycosylation. Functionally, catalyzes the transfer of L-fucose, from a guanosine diphosphate-beta-L-fucose, to the terminal galactose residue of glycoconjugates through an alpha(1,2) linkage leading to H antigen synthesis that is an intermediate substrate in the synthesis of ABO blood group antigens. H antigen is essential for maturation of the glomerular layer of the main olfactory bulb, in cell migration and early cell-cell contacts during tumor associated angiogenesis. Preferentially fucosylates soluble lactose and to a lesser extent fucosylates glycolipids gangliosides GA1 and GM1a. This chain is Galactoside alpha-(1,2)-fucosyltransferase 1, found in Rattus norvegicus (Rat).